The following is a 52-amino-acid chain: Light-harvesting protein B800/830/1020 alpha-1 chain (52 aa).

The Cytoplasmic segment spans residues 1 to 12 (MWRIWKVFDPRR). A helical transmembrane segment spans residues 13–33 (ILIATAIWLIIIALTIHVILM). His29 serves as a coordination point for a bacteriochlorophyll. The Periplasmic segment spans residues 34–52 (TTERFNWLEGAPAAEYYSS).

Belongs to the antenna complex alpha subunit family. In terms of assembly, the core complex is formed by different alpha and beta chains, binding bacteriochlorophyll molecules, and arranged most probably in tetrameric structures disposed around the reaction center. The non-pigmented gamma chains may constitute additional components.

The protein resides in the cell inner membrane. In terms of biological role, antenna complexes are light-harvesting systems, which transfer the excitation energy to the reaction centers. The polypeptide is Light-harvesting protein B800/830/1020 alpha-1 chain (Halorhodospira halochloris (Ectothiorhodospira halochloris)).